The chain runs to 429 residues: Na(+)/H(+) antiporter NhaA 1 (429 aa).

The next 12 membrane-spanning stretches (helical) occupy residues 32–52 (ISGG…NSPW), 73–93 (LSVQ…VAGL), 111–131 (VVPV…YSLL), 140–160 (GWAI…AVVG), 170–190 (FLLT…AVAY), 193–213 (ELSV…TLLV), 219–239 (AWWL…ASGV), 243–263 (VAGV…AGGP), 284–304 (VAVP…LGGL), 316–336 (VVVG…WLVA), 349–369 (WVDV…SLLI), and 383–403 (HVKV…TVVL).

This sequence belongs to the NhaA Na(+)/H(+) (TC 2.A.33) antiporter family.

The protein localises to the cell membrane. The enzyme catalyses Na(+)(in) + 2 H(+)(out) = Na(+)(out) + 2 H(+)(in). In terms of biological role, na(+)/H(+) antiporter that extrudes sodium in exchange for external protons. This is Na(+)/H(+) antiporter NhaA 1 from Frankia alni (strain DSM 45986 / CECT 9034 / ACN14a).